The sequence spans 79 residues: MHYSIIKPKCKKEIIEIDKGSLKTKRKFAFLLEIGDKILNNKEFYANDDVEVVVDYSFTDSKRPKEKIELYIIEDIKRD.

This is an uncharacterized protein from Methanocaldococcus jannaschii (strain ATCC 43067 / DSM 2661 / JAL-1 / JCM 10045 / NBRC 100440) (Methanococcus jannaschii).